The sequence spans 247 residues: Aspartate/glutamate leucyltransferase (247 aa).

The protein belongs to the R-transferase family. Bpt subfamily.

It is found in the cytoplasm. The catalysed reaction is N-terminal L-glutamyl-[protein] + L-leucyl-tRNA(Leu) = N-terminal L-leucyl-L-glutamyl-[protein] + tRNA(Leu) + H(+). It carries out the reaction N-terminal L-aspartyl-[protein] + L-leucyl-tRNA(Leu) = N-terminal L-leucyl-L-aspartyl-[protein] + tRNA(Leu) + H(+). Functionally, functions in the N-end rule pathway of protein degradation where it conjugates Leu from its aminoacyl-tRNA to the N-termini of proteins containing an N-terminal aspartate or glutamate. The chain is Aspartate/glutamate leucyltransferase from Dechloromonas aromatica (strain RCB).